Reading from the N-terminus, the 531-residue chain is Na(+)/H(+) antiporter NhaB (531 aa).

The next 11 membrane-spanning stretches (helical) occupy residues 23–45 (IAIL…VAGW), 66–86 (PGGL…SQVL), 97–117 (LLLI…LFVF), 130–164 (VSLM…FYSI), 206–226 (LLMH…VGEP), 244–264 (LRMG…CFLV), 307–327 (AFVG…VGLI), 352–372 (EEAL…GVII), 393–413 (LVIF…VFVG), 451–471 (ATPN…APLI), and 478–498 (MVWM…LAIE).

It belongs to the NhaB Na(+)/H(+) (TC 2.A.34) antiporter family.

The protein resides in the cell inner membrane. It carries out the reaction 2 Na(+)(in) + 3 H(+)(out) = 2 Na(+)(out) + 3 H(+)(in). In terms of biological role, na(+)/H(+) antiporter that extrudes sodium in exchange for external protons. This Shewanella loihica (strain ATCC BAA-1088 / PV-4) protein is Na(+)/H(+) antiporter NhaB.